Reading from the N-terminus, the 216-residue chain is LexA repressor 1 (216 aa).

The segment at residues T38–R58 is a DNA-binding region (H-T-H motif). Catalysis depends on for autocatalytic cleavage activity residues S140 and K177.

The protein belongs to the peptidase S24 family. Homodimer.

It catalyses the reaction Hydrolysis of Ala-|-Gly bond in repressor LexA.. Functionally, represses a number of genes involved in the response to DNA damage (SOS response), including recA and lexA. In the presence of single-stranded DNA, RecA interacts with LexA causing an autocatalytic cleavage which disrupts the DNA-binding part of LexA, leading to derepression of the SOS regulon and eventually DNA repair. This is LexA repressor 1 from Nocardia farcinica (strain IFM 10152).